Consider the following 659-residue polypeptide: Pesticidal crystal protein Cry3Ba (659 aa).

A disordered region spans residues 1 to 41 (MIRMGGRKMNPNNRSEYDTIKVTPNSELPTNHNQYPLADNP). Positions 22–41 (VTPNSELPTNHNQYPLADNP) are enriched in polar residues.

Belongs to the delta endotoxin family.

Promotes colloidosmotic lysis by binding to the midgut epithelial cells of Coleoptera. The protein is Pesticidal crystal protein Cry3Ba (cry3Ba) of Bacillus thuringiensis subsp. tolworthi.